Reading from the N-terminus, the 345-residue chain is Esterase (345 aa).

An N-terminal signal peptide occupies residues M1–A39. 3 disulfides stabilise this stretch: C73/C103, C156/C180, and C236/C294.

It is found in the secreted. The sequence is that of Esterase (estA) from Streptomyces scabiei.